We begin with the raw amino-acid sequence, 329 residues long: Mitochondrial glycine transporter (329 aa).

Solcar repeat units lie at residues 19 to 103 (SKTT…LRQP), 130 to 214 (LSNW…LKRH), and 232 to 316 (SSSS…LILR). Helical transmembrane passes span 25–50 (FAAG…TRVQ), 78–104 (GTLP…RQPL), 136–161 (LGTG…VRYE), 189–212 (GFGA…EQLK), 236–262 (INFI…KTRL), and 291–309 (GLGL…AWTV).

It belongs to the mitochondrial carrier (TC 2.A.29) family. SLC25A38 subfamily.

The protein localises to the mitochondrion inner membrane. It carries out the reaction glycine(in) = glycine(out). Mitochondrial glycine transporter that imports glycine into the mitochondrial matrix. Plays an important role in providing glycine for the first enzymatic step in heme biosynthesis, the condensation of glycine with succinyl-CoA to produce 5-aminolevulinate (ALA) in the mitochondrial matrix. The polypeptide is Mitochondrial glycine transporter (Aspergillus terreus (strain NIH 2624 / FGSC A1156)).